The sequence spans 207 residues: Glycerol-3-phosphate acyltransferase 1 (207 aa).

5 helical membrane passes run 3–23 (YVIASLLGYIFGCIHGSQIVG), 53–73 (IVVALIDIFKATAAIFLLLIL), 85–105 (HIYIYLTALFVIIGHNYPITM), 127–147 (IALIGIGVLILFTIATDYLAV), and 154–174 (ISFLITTYYIFGLAPFFIVVG).

The protein belongs to the PlsY family. Probably interacts with PlsX.

Its subcellular location is the cell membrane. The enzyme catalyses an acyl phosphate + sn-glycerol 3-phosphate = a 1-acyl-sn-glycero-3-phosphate + phosphate. The protein operates within lipid metabolism; phospholipid metabolism. Its function is as follows. Catalyzes the transfer of an acyl group from acyl-phosphate (acyl-PO(4)) to glycerol-3-phosphate (G3P) to form lysophosphatidic acid (LPA). This enzyme utilizes acyl-phosphate as fatty acyl donor, but not acyl-CoA or acyl-ACP. The sequence is that of Glycerol-3-phosphate acyltransferase 1 from Oceanobacillus iheyensis (strain DSM 14371 / CIP 107618 / JCM 11309 / KCTC 3954 / HTE831).